Reading from the N-terminus, the 156-residue chain is Protein BUNDLE SHEATH DEFECTIVE 2, chloroplastic (156 aa).

Residues 1–41 constitute a chloroplast transit peptide; sequence MNSAALNARTASVAPQPQACHACKCRQLLSRRVPPAQRQVE. Zn(2+) contacts are provided by Cys78, Cys81, Cys89, Cys92, Cys133, Cys136, Cys144, and Cys147.

This sequence belongs to the BSD2 chaperone family. Interacts with the RuBisCo large subunit (RbcL) assembled as an intermediate complex made of eight RbcL and eight BSD2 subunits.

It is found in the plastid. The protein localises to the chloroplast stroma. Chloroplast chaperone required for RuBisCo biogenesis and translational regulation of the RuBisCo large subunit (RbcL). Stabilizes an end-state assembly intermediate of eight RbcL subunits until the small subunits (RBCSs) become available to produce a complete stable RuBisCo complex containing eight small and eight large subunits. This chain is Protein BUNDLE SHEATH DEFECTIVE 2, chloroplastic, found in Chlamydomonas reinhardtii (Chlamydomonas smithii).